The sequence spans 552 residues: ATP synthase subunit alpha (552 aa).

173–180 serves as a coordination point for ATP; the sequence is GDRQTGKS. A disordered region spans residues 509–552; it reads KPQFSGGSKGSNVPKDVDAGATDADDISQEKITTRKGGATAARG.

Belongs to the ATPase alpha/beta chains family. In terms of assembly, F-type ATPases have 2 components, CF(1) - the catalytic core - and CF(0) - the membrane proton channel. CF(1) has five subunits: alpha(3), beta(3), gamma(1), delta(1), epsilon(1). CF(0) has three main subunits: a(1), b(2) and c(9-12). The alpha and beta chains form an alternating ring which encloses part of the gamma chain. CF(1) is attached to CF(0) by a central stalk formed by the gamma and epsilon chains, while a peripheral stalk is formed by the delta and b chains.

The protein localises to the cell membrane. It carries out the reaction ATP + H2O + 4 H(+)(in) = ADP + phosphate + 5 H(+)(out). Its function is as follows. Produces ATP from ADP in the presence of a proton gradient across the membrane. The alpha chain is a regulatory subunit. The chain is ATP synthase subunit alpha from Kineococcus radiotolerans (strain ATCC BAA-149 / DSM 14245 / SRS30216).